Consider the following 391-residue polypeptide: Mannose-6-phosphate isomerase (391 aa).

4 residues coordinate Zn(2+): Gln97, His99, Glu134, and His255. Arg274 is a catalytic residue. An N6-acetyllysine modification is found at Lys280.

The protein belongs to the mannose-6-phosphate isomerase type 1 family. Zn(2+) serves as cofactor.

It is found in the cytoplasm. The enzyme catalyses D-mannose 6-phosphate = D-fructose 6-phosphate. Functionally, involved in the conversion of glucose to GDP-L-fucose, which can be converted to L-fucose, a capsular polysaccharide. The protein is Mannose-6-phosphate isomerase (manA) of Shigella flexneri.